The chain runs to 165 residues: UPF0114 protein ESA_00283 (165 aa).

3 helical membrane passes run Leu15–Phe35, Leu53–Val73, and Leu136–Leu156.

It belongs to the UPF0114 family.

The protein resides in the cell membrane. This is UPF0114 protein ESA_00283 from Cronobacter sakazakii (strain ATCC BAA-894) (Enterobacter sakazakii).